Consider the following 556-residue polypeptide: Formate--tetrahydrofolate ligase (556 aa).

65–72 (TPAGEGKS) is a binding site for ATP.

Belongs to the formate--tetrahydrofolate ligase family.

The enzyme catalyses (6S)-5,6,7,8-tetrahydrofolate + formate + ATP = (6R)-10-formyltetrahydrofolate + ADP + phosphate. It functions in the pathway one-carbon metabolism; tetrahydrofolate interconversion. The polypeptide is Formate--tetrahydrofolate ligase (Streptococcus pneumoniae (strain JJA)).